Consider the following 291-residue polypeptide: 4-hydroxy-tetrahydrodipicolinate synthase (291 aa).

Position 45 (Thr-45) interacts with pyruvate. Tyr-133 (proton donor/acceptor) is an active-site residue. Lys-161 (schiff-base intermediate with substrate) is an active-site residue. Ile-203 provides a ligand contact to pyruvate.

This sequence belongs to the DapA family. Homotetramer; dimer of dimers.

It is found in the cytoplasm. The enzyme catalyses L-aspartate 4-semialdehyde + pyruvate = (2S,4S)-4-hydroxy-2,3,4,5-tetrahydrodipicolinate + H2O + H(+). It functions in the pathway amino-acid biosynthesis; L-lysine biosynthesis via DAP pathway; (S)-tetrahydrodipicolinate from L-aspartate: step 3/4. Functionally, catalyzes the condensation of (S)-aspartate-beta-semialdehyde [(S)-ASA] and pyruvate to 4-hydroxy-tetrahydrodipicolinate (HTPA). In Neisseria gonorrhoeae (strain ATCC 700825 / FA 1090), this protein is 4-hydroxy-tetrahydrodipicolinate synthase.